The chain runs to 401 residues: Tyrosine--tRNA ligase (401 aa).

Positions 42-51 match the 'HIGH' region motif; the sequence is PTAPDLHLGH. The 'KMSKS' region signature appears at 226–230; that stretch reads KMSKS. Lysine 229 is a binding site for ATP. The region spanning 336–397 is the S4 RNA-binding domain; it reads IALAQLLKQI…GKRRIAKLSI (62 aa).

This sequence belongs to the class-I aminoacyl-tRNA synthetase family. TyrS type 2 subfamily. Homodimer.

The protein resides in the cytoplasm. The enzyme catalyses tRNA(Tyr) + L-tyrosine + ATP = L-tyrosyl-tRNA(Tyr) + AMP + diphosphate + H(+). Functionally, catalyzes the attachment of tyrosine to tRNA(Tyr) in a two-step reaction: tyrosine is first activated by ATP to form Tyr-AMP and then transferred to the acceptor end of tRNA(Tyr). The protein is Tyrosine--tRNA ligase of Legionella pneumophila (strain Paris).